Consider the following 438-residue polypeptide: UDP-N-acetylmuramoylalanine--D-glutamate ligase (438 aa).

Residue 112–118 (GSNGKST) coordinates ATP.

Belongs to the MurCDEF family.

The protein resides in the cytoplasm. The catalysed reaction is UDP-N-acetyl-alpha-D-muramoyl-L-alanine + D-glutamate + ATP = UDP-N-acetyl-alpha-D-muramoyl-L-alanyl-D-glutamate + ADP + phosphate + H(+). Its pathway is cell wall biogenesis; peptidoglycan biosynthesis. Functionally, cell wall formation. Catalyzes the addition of glutamate to the nucleotide precursor UDP-N-acetylmuramoyl-L-alanine (UMA). This Salmonella paratyphi A (strain ATCC 9150 / SARB42) protein is UDP-N-acetylmuramoylalanine--D-glutamate ligase.